A 717-amino-acid chain; its full sequence is Putative amino acid transporter AAT1 (717 aa).

Over residues 1-10 (MREGAFDASR) the composition is skewed to basic and acidic residues. Residues 1-88 (MREGAFDASR…DRAQTDSRQE (88 aa)) form a disordered region. Residues 16–25 (QRPSSLSTAQ) are compositionally biased toward polar residues. The segment covering 26-53 (PPSDSRPPSSSSPPSSSSSSSSASSSSP) has biased composition (low complexity). Residues 74-88 (SAEKMDRAQTDSRQE) are compositionally biased toward basic and acidic residues. 8 helical membrane passes run 124–143 (VLTLASSCLGAGVLATPYAM), 149–170 (LIGLSLLCMHTFVSFFTTYILM), 196–216 (AVDAIIVLNGLGVCLSFLVFL), 236–253 (HRAALLCASMVVIFPLSV), 265–283 (FFPVCALLFSLSCVVYRSL), 303–320 (FKSFNVFLFAFMQHINVC), 341–358 (AALLEYCLYTPIATLGYL), and 378–402 (LMHVCTLLLSFSMVLGVPLTLIPTV). The segment at 462–602 (GDAEYGGAEA…REEREEREGQ (141 aa)) is disordered. Positions 463-477 (DAEYGGAEAGEATRG) are enriched in low complexity. Residues 497–519 (ARNRDRSRLHADSERSAGDREGS) show a composition bias toward basic and acidic residues. The span at 547-558 (GSSSASSRSVDS) shows a compositional bias: low complexity. The segment covering 584-602 (SGDREAREEREEREEREGQ) has biased composition (basic and acidic residues). A run of 3 helical transmembrane segments spans residues 622 to 638 (VCVAACLLPVLLLALVL), 644 to 669 (VVGLLGGFFSTLLMSALPSIIFYAGI), and 681 to 702 (LLMVFLLGVTCVGAFSSVIIIL).

It belongs to the amino acid/polyamine transporter 2 family.

Its subcellular location is the vacuole membrane. Its function is as follows. Putative amino acid transporter. Probably transports arginine. Involved in maintaining the osmotic homeostasis of the digestive vacuole. Required for extracellular parasite survival and bradyzoite differentiation. The protein is Putative amino acid transporter AAT1 of Toxoplasma gondii (strain ATCC 50611 / Me49).